Reading from the N-terminus, the 453-residue chain is DNA repair protein RadA (453 aa).

A C4-type zinc finger spans residues 10–27 (CQECGYQSPKYLGRCPNC). An ATP-binding site is contributed by 95–102 (GDPGIGKS). Residues 251–255 (KNRFG) carry the RadA KNRFG motif motif. The interval 350-453 (DAYLKSAGGV…VGQVLKAVFS (104 aa)) is lon-protease-like.

The protein belongs to the RecA family. RadA subfamily.

Functionally, DNA-dependent ATPase involved in processing of recombination intermediates, plays a role in repairing DNA breaks. Stimulates the branch migration of RecA-mediated strand transfer reactions, allowing the 3' invading strand to extend heteroduplex DNA faster. Binds ssDNA in the presence of ADP but not other nucleotides, has ATPase activity that is stimulated by ssDNA and various branched DNA structures, but inhibited by SSB. Does not have RecA's homology-searching function. The polypeptide is DNA repair protein RadA (Streptococcus pyogenes serotype M3 (strain ATCC BAA-595 / MGAS315)).